Reading from the N-terminus, the 260-residue chain is Snake venom serine protease pallabin-2 (260 aa).

A signal peptide spans 1–18 (MVLIKVLANLLILQLSYA). Positions 19–24 (QKSSEL) are excised as a propeptide. The region spanning 25 to 251 (IIGGDECNIN…HLDWIENIIA (227 aa)) is the Peptidase S1 domain. 6 disulfides stabilise this stretch: cysteine 31-cysteine 163, cysteine 50-cysteine 66, cysteine 98-cysteine 258, cysteine 142-cysteine 212, cysteine 174-cysteine 191, and cysteine 202-cysteine 227. The Charge relay system role is filled by histidine 65. Asparagine 103 is a glycosylation site (N-linked (GlcNAc...) asparagine). The active-site Charge relay system is aspartate 110. Serine 206 serves as the catalytic Charge relay system.

It belongs to the peptidase S1 family. Snake venom subfamily. In terms of assembly, monomer. As to expression, expressed by the venom gland.

The protein resides in the secreted. Snake venom serine protease that may act in the hemostasis system of the prey. The chain is Snake venom serine protease pallabin-2 (JZTHR7) from Gloydius halys (Chinese water mocassin).